A 202-amino-acid polypeptide reads, in one-letter code: Outer-membrane lipoprotein carrier protein (202 aa).

The first 18 residues, 1-18, serve as a signal peptide directing secretion; that stretch reads MNRLFLILLLIFSHEVFS.

Belongs to the LolA family. As to quaternary structure, monomer.

The protein localises to the periplasm. Functionally, participates in the translocation of lipoproteins from the inner membrane to the outer membrane. Only forms a complex with a lipoprotein if the residue after the N-terminal Cys is not an aspartate (The Asp acts as a targeting signal to indicate that the lipoprotein should stay in the inner membrane). In Legionella pneumophila (strain Lens), this protein is Outer-membrane lipoprotein carrier protein.